Consider the following 65-residue polypeptide: Antimicrobial peptide 1 (65 aa).

A signal peptide spans 1–27 (MAKVSSAYLKFALVMILLLSVISAVMS). Disulfide bonds link C30–C47, C37–C51, and C46–C62.

This sequence belongs to the AMP family. In terms of tissue distribution, seed specific.

The protein resides in the secreted. Functionally, possesses antifungal activity. This chain is Antimicrobial peptide 1, found in Phytolacca americana (American pokeweed).